The chain runs to 180 residues: UPF0149 protein XOO1028 (180 aa).

This sequence belongs to the UPF0149 family.

This Xanthomonas oryzae pv. oryzae (strain MAFF 311018) protein is UPF0149 protein XOO1028.